Here is a 364-residue protein sequence, read N- to C-terminus: Phosphoserine aminotransferase (364 aa).

Arg42 lines the L-glutamate pocket. Residues 76–77, Trp100, Thr150, Asp169, and Gln192 contribute to the pyridoxal 5'-phosphate site; that span reads AS. An N6-(pyridoxal phosphate)lysine modification is found at Lys193. 234-235 contributes to the pyridoxal 5'-phosphate binding site; it reads NT.

This sequence belongs to the class-V pyridoxal-phosphate-dependent aminotransferase family. SerC subfamily. Homodimer. It depends on pyridoxal 5'-phosphate as a cofactor.

Its subcellular location is the cytoplasm. It carries out the reaction O-phospho-L-serine + 2-oxoglutarate = 3-phosphooxypyruvate + L-glutamate. The enzyme catalyses 4-(phosphooxy)-L-threonine + 2-oxoglutarate = (R)-3-hydroxy-2-oxo-4-phosphooxybutanoate + L-glutamate. The protein operates within amino-acid biosynthesis; L-serine biosynthesis; L-serine from 3-phospho-D-glycerate: step 2/3. Catalyzes the reversible conversion of 3-phosphohydroxypyruvate to phosphoserine and of 3-hydroxy-2-oxo-4-phosphonooxybutanoate to phosphohydroxythreonine. The protein is Phosphoserine aminotransferase of Shouchella clausii (strain KSM-K16) (Alkalihalobacillus clausii).